Consider the following 65-residue polypeptide: Large ribosomal subunit protein uL29 (65 aa).

The protein belongs to the universal ribosomal protein uL29 family.

This chain is Large ribosomal subunit protein uL29, found in Natranaerobius thermophilus (strain ATCC BAA-1301 / DSM 18059 / JW/NM-WN-LF).